We begin with the raw amino-acid sequence, 117 residues long: MPLYEHVFISRQDLSNAQAESLVEHFGSVLADNGGKVVDSEYWGLKTMAYKINKNRKGHYAFLKTDAPAPAVQEMERLMRLHDDVMRVMTIKVDEHPEGPSIQMQKREERDNRRERR.

Positions 92–117 are disordered; sequence KVDEHPEGPSIQMQKREERDNRRERR. Positions 105–117 are enriched in basic and acidic residues; sequence QKREERDNRRERR.

This sequence belongs to the bacterial ribosomal protein bS6 family.

Its function is as follows. Binds together with bS18 to 16S ribosomal RNA. In Dinoroseobacter shibae (strain DSM 16493 / NCIMB 14021 / DFL 12), this protein is Small ribosomal subunit protein bS6.